Here is a 384-residue protein sequence, read N- to C-terminus: Guanine nucleotide-binding protein alpha-1 subunit (384 aa).

Positions 1–22 are disordered; that stretch reads MGSLCSRNKHYSQADDEENTQT. A lipid anchor (N-myristoyl glycine) is attached at Gly-2. The S-palmitoyl cysteine moiety is linked to residue Cys-5. The region spanning 38–384 is the G-alpha domain; it reads HIQKLLLLGA…RRNLFEAGLL (347 aa). The segment at 41–54 is G1 motif; it reads KLLLLGAGDSGKST. GTP contacts are provided by Asp-49, Ser-50, Gly-51, Lys-52, Ser-53, Thr-54, Asp-163, Leu-188, Thr-194, Gly-222, Asn-288, Lys-289, Asp-291, and Ala-356. Residue Ser-53 coordinates Mg(2+). A G2 motif region spans residues 186-194; that stretch reads DVLFARIRT. Thr-194 serves as a coordination point for Mg(2+). Positions 215–224 are G3 motif; that stretch reads YRLFDVGGQR. The G4 motif stretch occupies residues 284–291; it reads MLFLNKFD. The interval 354–359 is G5 motif; that stretch reads TTALDQ.

It belongs to the G-alpha family. As to quaternary structure, g proteins are composed of 3 units; alpha, beta and gamma. The alpha chain contains the guanine nucleotide binding site. The cofactor is Mg(2+).

Functionally, guanine nucleotide-binding proteins (G proteins) are involved as modulators or transducers in various transmembrane signaling systems. This chain is Guanine nucleotide-binding protein alpha-1 subunit (GPA1), found in Solanum lycopersicum (Tomato).